A 122-amino-acid polypeptide reads, in one-letter code: Urease subunit beta (122 aa).

A disordered region spans residues 102-122 (DGGTAVAGEPRPGIAAERDHQ).

Belongs to the urease beta subunit family. Heterotrimer of UreA (gamma), UreB (beta) and UreC (alpha) subunits. Three heterotrimers associate to form the active enzyme.

It localises to the cytoplasm. It carries out the reaction urea + 2 H2O + H(+) = hydrogencarbonate + 2 NH4(+). Its pathway is nitrogen metabolism; urea degradation; CO(2) and NH(3) from urea (urease route): step 1/1. The polypeptide is Urease subunit beta (Paenarthrobacter aurescens (strain TC1)).